The chain runs to 119 residues: MSQEKISEIIKDISALKTSCEKLNSQLDELITQKVENEMLLEEVKVLEDDSVLHKLVGLVLVKEEKSKCYDTISRRLQYITGEIENRKKVITNSEEKLRKLFSDLEAHAGQRKIPVPQA.

It belongs to the prefoldin subunit beta family. As to quaternary structure, heterohexamer of two PFD-alpha type and four PFD-beta type subunits. May interact with MSP1.

Binds specifically to cytosolic chaperonin (c-CPN) and transfers target proteins to it. Binds to nascent polypeptide chain and promotes folding in an environment in which there are many competing pathways for nonnative proteins. This chain is Probable prefoldin subunit 6, found in Plasmodium falciparum (isolate 3D7).